Consider the following 190-residue polypeptide: Imidazole glycerol phosphate synthase subunit HisH (190 aa).

The Glutamine amidotransferase type-1 domain occupies 2–190 (IVGVVDYTVG…IKRFLAVAKR (189 aa)). The active-site Nucleophile is the cysteine 73. Active-site residues include histidine 169 and glutamate 171.

Heterodimer of HisH and HisF.

Its subcellular location is the cytoplasm. It carries out the reaction 5-[(5-phospho-1-deoxy-D-ribulos-1-ylimino)methylamino]-1-(5-phospho-beta-D-ribosyl)imidazole-4-carboxamide + L-glutamine = D-erythro-1-(imidazol-4-yl)glycerol 3-phosphate + 5-amino-1-(5-phospho-beta-D-ribosyl)imidazole-4-carboxamide + L-glutamate + H(+). The enzyme catalyses L-glutamine + H2O = L-glutamate + NH4(+). It functions in the pathway amino-acid biosynthesis; L-histidine biosynthesis; L-histidine from 5-phospho-alpha-D-ribose 1-diphosphate: step 5/9. Its function is as follows. IGPS catalyzes the conversion of PRFAR and glutamine to IGP, AICAR and glutamate. The HisH subunit catalyzes the hydrolysis of glutamine to glutamate and ammonia as part of the synthesis of IGP and AICAR. The resulting ammonia molecule is channeled to the active site of HisF. The sequence is that of Imidazole glycerol phosphate synthase subunit HisH from Pyrobaculum aerophilum (strain ATCC 51768 / DSM 7523 / JCM 9630 / CIP 104966 / NBRC 100827 / IM2).